Consider the following 482-residue polypeptide: uncharacterized protein (482 aa).

Low complexity-rich tracts occupy residues 24–86 (SPNS…AQQQ) and 312–339 (TDSL…SQSI). 2 disordered regions span residues 24–88 (SPNS…QQHY) and 307–376 (LHSQ…LIGK). Residues 342 to 363 (EEEEDGGEDEEEEGGEDNDNES) show a composition bias toward acidic residues.

This is an uncharacterized protein from Dictyostelium discoideum (Social amoeba).